Reading from the N-terminus, the 520-residue chain is 5'-nucleotidase domain-containing protein 2 (520 aa).

Catalysis depends on aspartate 73, which acts as the Nucleophile. The Mg(2+) site is built by aspartate 73, aspartate 75, and aspartate 358. Aspartate 75 (proton donor) is an active-site residue.

This sequence belongs to the 5'(3')-deoxyribonucleotidase family. As to quaternary structure, interacts with tyrosine 3-monooxygenase TH; the interaction results in reduced phosphorylation and decreased catalytic activity of TH.

The protein resides in the cytoplasm. Its function is as follows. Promotes dephosphorylation of tyrosine 3-monooxygenase TH which decreases TH catalytic activity and leads to reduced synthesis of catecholamines including dopamine, noradrenaline and adrenaline. The exact mechanism of activity is unknown but may act as a phosphatase or promote the activity of phosphatases or may inhibit phosphorylation by acting as a barrier to interfere with protein kinase access. The polypeptide is 5'-nucleotidase domain-containing protein 2 (NT5DC2) (Homo sapiens (Human)).